The following is a 198-amino-acid chain: Angiopoietin-like protein 8 (198 aa).

A signal peptide spans 1–21 (MPVPALCLLWALAMVTRPASA).

It belongs to the ANGPTL8 family. In terms of assembly, interacts with ANGPTL3. Post-translationally, proteolytically cleaved at the N-terminus. As to expression, predominantly expressed in liver. Also expressed in adipose tissues.

The protein resides in the secreted. Functionally, hormone that acts as a blood lipid regulator by regulating serum triglyceride levels. May be involved in the metabolic transition between fasting and refeeding: required to direct fatty acids to adipose tissue for storage in the fed state. This Homo sapiens (Human) protein is Angiopoietin-like protein 8.